Consider the following 166-residue polypeptide: UPF0561 protein C2orf68 homolog (166 aa).

Positions 32–49 (NQLDRDDYDKKVKQAAKE) are enriched in basic and acidic residues. The interval 32 to 107 (NQLDRDDYDK…SELEPPGRQL (76 aa)) is disordered. Residues 91–101 (ESSSSGSSELE) are compositionally biased toward low complexity.

It belongs to the UPF0561 family.

The sequence is that of UPF0561 protein C2orf68 homolog from Mus musculus (Mouse).